The sequence spans 463 residues: Perilipin-5 (463 aa).

The interaction with LIPE stretch occupies residues 1–108; it reads MSEEEAAQIP…KLEEKLPFLQ (108 aa). The segment at 1–173 is essential for lipid droplet targeting; the sequence is MSEEEAAQIP…HFLPMTEEEL (173 aa). Residues S2, S148, and S322 each carry the phosphoserine modification. Residues 185–463 form an interaction with PNPLA2 and ABHD5 region; the sequence is VGSVEDQRRQ…KHTLMPELDF (279 aa). A recruits mitochondria at the lipid droplet surface region spans residues 444 to 463; that stretch reads QEPETPSCPVKHTLMPELDF.

Belongs to the perilipin family. In terms of assembly, homooligomer. Interacts with PNPLA2; prevents interaction of PNPLA2 with ABHD5. Interacts with ABHD5; targets ABHD5 to lipid droplets and promotes interaction of ABHD5 with PNPLA2. Interacts with LIPE. Phosphorylated by PKA. Phosphorylated on serine in skeletal muscle at rest or upon lipolytic stimulation. As to expression, expressed in skeletal muscle, liver, heart and kidney.

Its subcellular location is the lipid droplet. It localises to the cytoplasm. The protein resides in the mitochondrion. Functionally, lipid droplet-associated protein that maintains the balance between lipogenesis and lipolysis and also regulates fatty acid oxidation in oxidative tissues. Recruits mitochondria to the surface of lipid droplets and is involved in lipid droplet homeostasis by regulating both the storage of fatty acids in the form of triglycerides and the release of fatty acids for mitochondrial fatty acid oxidation. In lipid droplet triacylglycerol hydrolysis, plays a role as a scaffolding protein for three major key lipolytic players: ABHD5, PNPLA2 and LIPE. Reduces the triacylglycerol hydrolase activity of PNPLA2 by recruiting and sequestering PNPLA2 to lipid droplets. Phosphorylation by PKA enables lipolysis probably by promoting release of ABHD5 from the perilipin scaffold and by facilitating interaction of ABHD5 with PNPLA2. Also increases lipolysis through interaction with LIPE and upon PKA-mediated phosphorylation of LIPE. The chain is Perilipin-5 (PLIN5) from Homo sapiens (Human).